The primary structure comprises 344 residues: UDP-N-acetylenolpyruvoylglucosamine reductase (344 aa).

One can recognise an FAD-binding PCMH-type domain in the interval 17–187; sequence VDYACSELIS…TGVGIKLAKK (171 aa). Arginine 163 is an active-site residue. Serine 233 acts as the Proton donor in catalysis. Residue glutamate 329 is part of the active site.

The protein belongs to the MurB family. It depends on FAD as a cofactor.

It localises to the cytoplasm. The enzyme catalyses UDP-N-acetyl-alpha-D-muramate + NADP(+) = UDP-N-acetyl-3-O-(1-carboxyvinyl)-alpha-D-glucosamine + NADPH + H(+). It functions in the pathway cell wall biogenesis; peptidoglycan biosynthesis. In terms of biological role, cell wall formation. The chain is UDP-N-acetylenolpyruvoylglucosamine reductase from Shewanella sediminis (strain HAW-EB3).